The chain runs to 172 residues: 3-hydroxydecanoyl-[acyl-carrier-protein] dehydratase (172 aa).

The active site involves H71.

The protein belongs to the thioester dehydratase family. FabA subfamily. Homodimer.

The protein localises to the cytoplasm. It catalyses the reaction a (3R)-hydroxyacyl-[ACP] = a (2E)-enoyl-[ACP] + H2O. The catalysed reaction is (3R)-hydroxydecanoyl-[ACP] = (2E)-decenoyl-[ACP] + H2O. It carries out the reaction (2E)-decenoyl-[ACP] = (3Z)-decenoyl-[ACP]. It participates in lipid metabolism; fatty acid biosynthesis. Functionally, necessary for the introduction of cis unsaturation into fatty acids. Catalyzes the dehydration of (3R)-3-hydroxydecanoyl-ACP to E-(2)-decenoyl-ACP and then its isomerization to Z-(3)-decenoyl-ACP. Can catalyze the dehydratase reaction for beta-hydroxyacyl-ACPs with saturated chain lengths up to 16:0, being most active on intermediate chain length. This Klebsiella pneumoniae subsp. pneumoniae (strain ATCC 700721 / MGH 78578) protein is 3-hydroxydecanoyl-[acyl-carrier-protein] dehydratase.